The chain runs to 89 residues: Putative regulatory protein Dalk_1931 (89 aa).

Belongs to the RemA family.

The polypeptide is Putative regulatory protein Dalk_1931 (Desulfatibacillum aliphaticivorans).